The sequence spans 317 residues: Sperm acrosome membrane-associated protein 6 (317 aa).

An N-terminal signal peptide occupies residues 1-18 (MFVFIAKLLIFSSVITSA). The Extracellular portion of the chain corresponds to 19-281 (FTCYQCFIDE…PSFSFWLPRP (263 aa)). Cystine bridges form between Cys21/Cys143, Cys24/Cys146, Cys35/Cys51, Cys128/Cys151, and Cys132/Cys157. A glycan (N-linked (GlcNAc...) asparagine) is linked at Asn29. Residues 123–237 (PRVSGCLPPC…EVLSQEQSLV (115 aa)) form the Ig-like domain. Asn168 is a glycosylation site (N-linked (GlcNAc...) asparagine). Cysteines 174 and 227 form a disulfide. A helical transmembrane segment spans residues 282–302 (ALLITCLTATMLLIFLSLGAM). Residues 303 to 317 (CRLWYQIRTNVSNPA) are Cytoplasmic-facing.

This sequence belongs to the SPACA6 family. In terms of assembly, forms a complex with izumo1 and tmem81 on spermatocyte cell membrane. The complex binds to oocyte protein bncr. In terms of tissue distribution, expressed in testis.

It is found in the cytoplasmic vesicle. The protein resides in the secretory vesicle. The protein localises to the acrosome membrane. Its function is as follows. Sperm protein required for fusion of sperm with the egg membrane during fertilization. May regulate the expression of sperm surface protein DCST2. In Danio rerio (Zebrafish), this protein is Sperm acrosome membrane-associated protein 6.